Consider the following 327-residue polypeptide: Microtubule-associated protein RP/EB family member 2 (327 aa).

A disordered region spans residues 1–21 (MPGPTQTLSPNGENNNDIIQD). Position 9 is a phosphoserine (Ser9). A Calponin-homology (CH) domain is found at 57-159 (TMSRHDIIAW…FIQWFKKFYD (103 aa)). Phosphotyrosine is present on Tyr167. Disordered stretches follow at residues 171-240 (EARQ…DKDL) and 299-327 (ASEE…QEEY). Positions 187-327 (QIFNLPKKSH…EQQPPQQEEY (141 aa)) are DCTN1-binding. A compositionally biased stretch (low complexity) spans 200 to 234 (SPTAGAAKSSPAAKPGSTPSRPSSAKRASSSGSAS). Phosphoserine is present on Ser219. In terms of domain architecture, EB1 C-terminal spans 236–306 (SDKDLETQVI…LYASEEHEGH (71 aa)). Positions 259 to 302 (EGVEKERDFYFGKLREIELLCQEHGQENDDLVQRLMDVLYASEE) are APC-binding. The span at 300-317 (SEEHEGHTEEPEAEEQAH) shows a compositional bias: basic and acidic residues. Positions 318–327 (EQQPPQQEEY) are enriched in low complexity.

The protein belongs to the MAPRE family. Interacts with DCTN1. Interacts with APC (via C-terminal). Interacts with monomeric and polymerized tubulin. Interacts with SLAIN1. Interacts (via the N-terminal region) with BAG1.

Its subcellular location is the cytoplasm. The protein resides in the cytoskeleton. Functionally, may be involved in microtubule polymerization, and spindle function by stabilizing microtubules and anchoring them at centrosomes. May play a role in cell migration. The sequence is that of Microtubule-associated protein RP/EB family member 2 (MAPRE2) from Pongo abelii (Sumatran orangutan).